The sequence spans 60 residues: Toxin FS-2 (60 aa).

4 disulfides stabilise this stretch: cysteine 3/cysteine 22, cysteine 17/cysteine 39, cysteine 41/cysteine 52, and cysteine 53/cysteine 58. An important for binding to L-type calcium channels region spans residues 41-48 (CPTAMWPY).

The protein belongs to the three-finger toxin family. Short-chain subfamily. L-type calcium blocker sub-subfamily. As to expression, expressed by the venom gland.

The protein resides in the secreted. In terms of biological role, specific blocker of the voltage-dependent L-type calcium channel (Cav1/CACNA1). Inhibits cardiac contractions. In Dendroaspis polylepis polylepis (Black mamba), this protein is Toxin FS-2.